A 335-amino-acid chain; its full sequence is uncharacterized protein (335 aa).

Positions 201–236 (GPMAKNKARRKEDNYDTHNCDDANQDKKEEAEGKNT) are disordered. The span at 210–235 (RKEDNYDTHNCDDANQDKKEEAEGKN) shows a compositional bias: basic and acidic residues.

Dispensable for normal development and fertility. This is an uncharacterized protein from Homo sapiens (Human).